A 57-amino-acid polypeptide reads, in one-letter code: uncharacterized protein (57 aa).

Positions 9 to 45 form a coiled coil; it reads NWQEEIRKIIIERVRREAKKRLLEETRKLRMEMKSSK.

This is an uncharacterized protein from Archaeoglobus fulgidus (strain ATCC 49558 / DSM 4304 / JCM 9628 / NBRC 100126 / VC-16).